A 387-amino-acid chain; its full sequence is Diphthine methyltransferase (387 aa).

5 WD repeats span residues 62-102, 119-159, 195-237, 241-286, and 357-387; these read NTYG…KDDF, EKDV…VQFT, PHEL…FIWS, IHDA…ESIF, and GHDS…TWIV.

It belongs to the DPH7 family. As to quaternary structure, interacts with CAN1 and RTT10.

It is found in the cytoplasm. The protein localises to the endosome. It catalyses the reaction diphthine methyl ester-[translation elongation factor 2] + H2O = diphthine-[translation elongation factor 2] + methanol + H(+). Its pathway is protein modification; peptidyl-diphthamide biosynthesis. Catalyzes the demethylation of diphthine methyl ester to form diphthine, an intermediate in diphthamide biosynthesis, a post-translational modification of histidine which occurs in translation elongation factor 2 (EFT1 and EFT2). Also plays a role in the regulation of the retromer complex and is required for the recycling from endosomes of plasma membrane proteins like CAN1 and MUP1. Identified in a screen for mutants with decreased levels of rDNA transcription. The chain is Diphthine methyltransferase (RRT2) from Saccharomyces cerevisiae (strain ATCC 204508 / S288c) (Baker's yeast).